The sequence spans 357 residues: UDP-N-acetylglucosamine--N-acetylmuramyl-(pentapeptide) pyrophosphoryl-undecaprenol N-acetylglucosamine transferase (357 aa).

UDP-N-acetyl-alpha-D-glucosamine contacts are provided by residues 14 to 16, N128, R169, S193, I248, and Q292; that span reads TGG.

The protein belongs to the glycosyltransferase 28 family. MurG subfamily.

It is found in the cell inner membrane. It carries out the reaction di-trans,octa-cis-undecaprenyl diphospho-N-acetyl-alpha-D-muramoyl-L-alanyl-D-glutamyl-meso-2,6-diaminopimeloyl-D-alanyl-D-alanine + UDP-N-acetyl-alpha-D-glucosamine = di-trans,octa-cis-undecaprenyl diphospho-[N-acetyl-alpha-D-glucosaminyl-(1-&gt;4)]-N-acetyl-alpha-D-muramoyl-L-alanyl-D-glutamyl-meso-2,6-diaminopimeloyl-D-alanyl-D-alanine + UDP + H(+). The protein operates within cell wall biogenesis; peptidoglycan biosynthesis. Functionally, cell wall formation. Catalyzes the transfer of a GlcNAc subunit on undecaprenyl-pyrophosphoryl-MurNAc-pentapeptide (lipid intermediate I) to form undecaprenyl-pyrophosphoryl-MurNAc-(pentapeptide)GlcNAc (lipid intermediate II). The protein is UDP-N-acetylglucosamine--N-acetylmuramyl-(pentapeptide) pyrophosphoryl-undecaprenol N-acetylglucosamine transferase of Bdellovibrio bacteriovorus (strain ATCC 15356 / DSM 50701 / NCIMB 9529 / HD100).